We begin with the raw amino-acid sequence, 359 residues long: Peptide chain release factor 1 (359 aa).

Gln236 carries the N5-methylglutamine modification.

The protein belongs to the prokaryotic/mitochondrial release factor family. Methylated by PrmC. Methylation increases the termination efficiency of RF1.

The protein localises to the cytoplasm. Peptide chain release factor 1 directs the termination of translation in response to the peptide chain termination codons UAG and UAA. This chain is Peptide chain release factor 1, found in Streptococcus mutans serotype c (strain ATCC 700610 / UA159).